We begin with the raw amino-acid sequence, 168 residues long: Photosystem I assembly protein Ycf3 (168 aa).

TPR repeat units follow at residues alanine 35–proline 68, serine 72–leucine 105, and glycine 120–asparagine 153.

This sequence belongs to the Ycf3 family.

Its subcellular location is the plastid. It localises to the chloroplast thylakoid membrane. In terms of biological role, essential for the assembly of the photosystem I (PSI) complex. May act as a chaperone-like factor to guide the assembly of the PSI subunits. The chain is Photosystem I assembly protein Ycf3 from Plantago lanceolata (English plantain).